Reading from the N-terminus, the 210-residue chain is Keratin-associated protein 4-9 (210 aa).

A run of 28 repeats spans residues 24 to 28 (CCRPS), 29 to 33 (CCETT), 34 to 38 (CCRTT), 39 to 43 (CCRPS), 44 to 48 (CCVSS), 49 to 53 (CCRPQ), 54 to 58 (CCQSV), 59 to 63 (CCQPT), 69 to 73 (CCQTT), 74 to 78 (CCRTT), 84 to 88 (CCVSS), 89 to 93 (CCRPQ), 94 to 98 (CCQPA), 99 to 103 (CCQPT), 104 to 108 (CCRPS), 109 to 113 (CCETT), 114 to 118 (CCHPR), 119 to 123 (CCISS), 124 to 128 (CCRPS), 129 to 133 (CCVSS), 134 to 138 (CCKPQ), 139 to 143 (CCQSV), 144 to 148 (CCQPN), 149 to 153 (CCRPS), 159 to 163 (CCRPS), 164 to 168 (CCESS), 169 to 173 (CCRPC), and 174 to 178 (CCVRP). A 29 X 5 AA repeats of C-C-[RQVHIEK]-[SPTR]-[VSTQCRNP] region spans residues 24–178 (CCRPSCCETT…CCRPCCCVRP (155 aa)).

The protein belongs to the KRTAP type 4 family. In terms of assembly, interacts with hair keratins. In terms of tissue distribution, expressed in the hair follicles.

In terms of biological role, in the hair cortex, hair keratin intermediate filaments are embedded in an interfilamentous matrix, consisting of hair keratin-associated proteins (KRTAP), which are essential for the formation of a rigid and resistant hair shaft through their extensive disulfide bond cross-linking with abundant cysteine residues of hair keratins. The matrix proteins include the high-sulfur and high-glycine-tyrosine keratins. In Homo sapiens (Human), this protein is Keratin-associated protein 4-9 (KRTAP4-9).